A 477-amino-acid polypeptide reads, in one-letter code: Proton-coupled amino acid transporter 3 (477 aa).

The span at 1–13 shows a compositional bias: basic and acidic residues; the sequence is MGKTPLLREDGRC. The tract at residues 1 to 42 is disordered; the sequence is MGKTPLLREDGRCQRNTFGGSKASSKGSSSSSSNNTVSSKKK. Topologically, residues 1-54 are cytoplasmic; that stretch reads MGKTPLLREDGRCQRNTFGGSKASSKGSSSSSSNNTVSSKKKPRRKADALMFIQ. The segment covering 19–38 has biased composition (low complexity); that stretch reads GGSKASSKGSSSSSSNNTVS. A helical membrane pass occupies residues 55-75; the sequence is IFIHLLKSNIGTGFLGLPLAV. Residues 76–77 lie on the Extracellular side of the membrane; it reads KN. The helical transmembrane segment at 78-98 threads the bilayer; it reads AGLLVGPVSLLAIGALTVHCM. Over 99-144 the chain is Cytoplasmic; that stretch reads DILLNCACHLTSRLQRSFVNYEETTMYSLETCPSPWLRTHSVWGRY. Residues 145 to 165 traverse the membrane as a helical segment; sequence VVSFLLIVTQLGFCSVYFMFM. At 166–202 the chain is on the extracellular side; the sequence is ADNLQQIVEEAHFTSNVCQPRQSLVMTSILDTRFYML. The helical transmembrane segment at 203 to 223 threads the bilayer; that stretch reads TILPFLILLVLVQNPQVLSIF. Over 224 to 225 the chain is Cytoplasmic; that stretch reads ST. Residues 226–246 traverse the membrane as a helical segment; it reads LATITTLSSLALIFEYLIQIP. The Extracellular segment spans residues 247-259; that stretch reads HHSHLPLVASWKT. A helical transmembrane segment spans residues 260 to 280; sequence FLLFFGTAIFTFEGVGMVLPL. At 281-291 the chain is on the cytoplasmic side; that stretch reads KSQMKSPQQFP. Residues 292–312 form a helical membrane-spanning segment; the sequence is AVLYLGMSFVIFLYICLGTLG. At 313-344 the chain is on the extracellular side; sequence YMKFGADTQASITLNLPNCWLYQSVKLMYSVG. The chain crosses the membrane as a helical span at residues 345-365; sequence IFFTYALQFHVPAEIIVPYVV. Topologically, residues 366–374 are cytoplasmic; that stretch reads SRASENWAL. The chain crosses the membrane as a helical span at residues 375–395; that stretch reads FIDLTVRAALVCLTCFSAVLI. Topologically, residues 396–399 are extracellular; it reads PRLD. Residues 400–420 form a helical membrane-spanning segment; the sequence is LVISLVGSVSSSALALIIPPL. The Cytoplasmic portion of the chain corresponds to 421–439; sequence LEIATFYSENISCTTIAKD. Residues 440–460 traverse the membrane as a helical segment; sequence IMISILGLLGCVLGTYQALYE. The Extracellular portion of the chain corresponds to 461-477; the sequence is MTQQSRFPMLNSTNVHT.

It belongs to the amino acid/polyamine transporter 2 family.

It is found in the membrane. The sequence is that of Proton-coupled amino acid transporter 3 (Slc36a3) from Rattus norvegicus (Rat).